Consider the following 401-residue polypeptide: tRNA-specific 2-thiouridylase MnmA (401 aa).

Residues 13–20 (GLSGGVDS) and Met39 contribute to the ATP site. Residues 99–101 (NPD) form an interaction with target base in tRNA region. Cys104 acts as the Nucleophile in catalysis. An intrachain disulfide couples Cys104 to Cys202. Position 128 (Gly128) interacts with ATP. Residues 152-154 (KDQ) form an interaction with tRNA region. The active-site Cysteine persulfide intermediate is the Cys202. Positions 329–330 (RY) are interaction with tRNA.

This sequence belongs to the MnmA/TRMU family.

It is found in the cytoplasm. It carries out the reaction S-sulfanyl-L-cysteinyl-[protein] + uridine(34) in tRNA + AH2 + ATP = 2-thiouridine(34) in tRNA + L-cysteinyl-[protein] + A + AMP + diphosphate + H(+). Functionally, catalyzes the 2-thiolation of uridine at the wobble position (U34) of tRNA, leading to the formation of s(2)U34. The sequence is that of tRNA-specific 2-thiouridylase MnmA from Polaromonas sp. (strain JS666 / ATCC BAA-500).